Consider the following 498-residue polypeptide: Calcium uptake protein, mitochondrial (498 aa).

A mitochondrion-targeting transit peptide spans 1 to 29; the sequence is MPALSHYRSVSSLPSVDRSFLLIQRLRIH. EF-hand domains follow at residues 216 to 241, 243 to 278, 329 to 364, and 437 to 472; these read EFFM…VTLL, IPES…MRSQ, LTEE…AADA, and LSDN…RERD. D222, D224, D226, E233, D256, D258, N260, E262, and E267 together coordinate Ca(2+). Ca(2+) contacts are provided by D450, N452, D454, N456, and E461.

The protein belongs to the MICU1 family. MICU1 subfamily. As to expression, expressed in both green and non-green tissues, including roots, shoots, floral buds and pollen.

The protein localises to the mitochondrion inner membrane. It is found in the mitochondrion intermembrane space. Its function is as follows. Calcium-binding protein maintaining matrix calcium levels at low concentration. Regulates mitochondrial calcium dynamics in planta by restricting influx. This chain is Calcium uptake protein, mitochondrial, found in Arabidopsis thaliana (Mouse-ear cress).